Here is a 420-residue protein sequence, read N- to C-terminus: Tyrosine--tRNA ligase 2 (420 aa).

Residue tyrosine 34 coordinates L-tyrosine. A 'HIGH' region motif is present at residues proline 39–histidine 48. L-tyrosine is bound by residues tyrosine 168 and glutamine 172. A 'KMSKS' region motif is present at residues lysine 230–serine 234. Lysine 233 contributes to the ATP binding site. The region spanning lysine 352 to leucine 418 is the S4 RNA-binding domain.

Belongs to the class-I aminoacyl-tRNA synthetase family. TyrS type 1 subfamily. As to quaternary structure, homodimer.

The protein resides in the cytoplasm. The catalysed reaction is tRNA(Tyr) + L-tyrosine + ATP = L-tyrosyl-tRNA(Tyr) + AMP + diphosphate + H(+). Catalyzes the attachment of tyrosine to tRNA(Tyr) in a two-step reaction: tyrosine is first activated by ATP to form Tyr-AMP and then transferred to the acceptor end of tRNA(Tyr). In Bacillus cereus (strain ATCC 14579 / DSM 31 / CCUG 7414 / JCM 2152 / NBRC 15305 / NCIMB 9373 / NCTC 2599 / NRRL B-3711), this protein is Tyrosine--tRNA ligase 2.